The following is an 854-amino-acid chain: DNA topoisomerase 1 type prokaryotic (854 aa).

The Toprim domain occupies 2 to 110; it reads SILILLESPG…KRLRFNAITK (109 aa). Mg(2+)-binding residues include Glu8 and Asp79. The Topo IA-type catalytic domain maps to 124-610; the sequence is DKNLVDAQKA…DFYDKLKPIV (487 aa). An interaction with DNA region spans residues 158–163; sequence SAGRVQ. Tyr302 functions as the O-(5'-phospho-DNA)-tyrosine intermediate in the catalytic mechanism. The segment at 802 to 854 is disordered; it reads KSAPKGGSKTIRKPSQTKYSQTKSTKSTKSTKSTNKKFVGKSAKKTTKKTTKK. A compositionally biased stretch (low complexity) spans 814 to 834; sequence KPSQTKYSQTKSTKSTKSTKS. Residues 835–854 show a composition bias toward basic residues; that stretch reads TNKKFVGKSAKKTTKKTTKK.

The protein belongs to the type IA topoisomerase family. Mg(2+) is required as a cofactor.

Its subcellular location is the virion. It carries out the reaction ATP-independent breakage of single-stranded DNA, followed by passage and rejoining.. Its function is as follows. Releases the supercoiling and torsional tension of DNA, which is introduced during the DNA replication and transcription, by transiently cleaving and rejoining one strand of the DNA duplex. Introduces a single-strand break via transesterification at a target site in duplex DNA. The scissile phosphodiester is attacked by the catalytic tyrosine of the enzyme, resulting in the formation of a DNA-(5'-phosphotyrosyl)-enzyme intermediate and the expulsion of a 3'-OH DNA strand. The free DNA strand then undergoes passage around the unbroken strand, thus removing DNA supercoils. Finally, in the religation step, the DNA 3'-OH attacks the covalent intermediate to expel the active-site tyrosine and restore the DNA phosphodiester backbone. The sequence is that of DNA topoisomerase 1 type prokaryotic (TOP1P) from Acanthamoeba polyphaga (Amoeba).